Consider the following 286-residue polypeptide: NADPH-dependent 7-cyano-7-deazaguanine reductase (286 aa).

Substrate is bound at residue 92 to 94 (IES). NADPH is bound at residue 94 to 95 (SK). Residue Cys194 is the Thioimide intermediate of the active site. Asp201 serves as the catalytic Proton donor. 233 to 234 (HE) serves as a coordination point for substrate. 262–263 (RG) contributes to the NADPH binding site.

Belongs to the GTP cyclohydrolase I family. QueF type 2 subfamily. In terms of assembly, homodimer.

It localises to the cytoplasm. It carries out the reaction 7-aminomethyl-7-carbaguanine + 2 NADP(+) = 7-cyano-7-deazaguanine + 2 NADPH + 3 H(+). Its pathway is tRNA modification; tRNA-queuosine biosynthesis. Catalyzes the NADPH-dependent reduction of 7-cyano-7-deazaguanine (preQ0) to 7-aminomethyl-7-deazaguanine (preQ1). This Shewanella sp. (strain MR-4) protein is NADPH-dependent 7-cyano-7-deazaguanine reductase.